A 644-amino-acid polypeptide reads, in one-letter code: Exoribonuclease 2 (644 aa).

The RNB domain maps to 189–516; the sequence is REDLTALDFV…NHRLLKAVIK (328 aa). In terms of domain architecture, S1 motif spans 561 to 643; that stretch reads DTRFAAEIVD…ETRSIIARPV (83 aa).

It belongs to the RNR ribonuclease family. RNase II subfamily.

It localises to the cytoplasm. The catalysed reaction is Exonucleolytic cleavage in the 3'- to 5'-direction to yield nucleoside 5'-phosphates.. Functionally, involved in mRNA degradation. Hydrolyzes single-stranded polyribonucleotides processively in the 3' to 5' direction. The sequence is that of Exoribonuclease 2 from Escherichia coli (strain ATCC 8739 / DSM 1576 / NBRC 3972 / NCIMB 8545 / WDCM 00012 / Crooks).